The primary structure comprises 148 residues: UPF0178 protein BH16190 (148 aa).

This sequence belongs to the UPF0178 family.

The polypeptide is UPF0178 protein BH16190 (Bartonella henselae (strain ATCC 49882 / DSM 28221 / CCUG 30454 / Houston 1) (Rochalimaea henselae)).